We begin with the raw amino-acid sequence, 152 residues long: Natriuretic peptides A (152 aa).

Residues 1–24 (MGSFSITKGFFLFLAFWLPGHIGA) form the signal peptide. Propeptides lie at residues 25 to 122 (NPVY…AGPR) and 92 to 102 (DGGALGRGPWD). Positions 54–104 (DEVMPPQALSEQTDEAGAALSSLSEVPPWTGEVNPSQRDGGALGRGPWDPS) are disordered. Residue Ser128 is modified to Phosphoserine. Residues Cys129 and Cys145 are joined by a disulfide bond. Positions 146–150 (NSFRY) are important for degradation of atrial natriuretic peptide by IDE.

Belongs to the natriuretic peptide family. Homodimer; disulfide-linked antiparallel dimer. Post-translationally, the precursor molecule is proteolytically cleaved by CORIN at Arg-122 to produce the atrial natriuretic peptide. Undergoes further proteolytic cleavage by unknown proteases to give rise to long-acting natriuretic peptide, vessel dilator and kaliuretic peptide. Additional processing gives rise to the auriculin and atriopeptin peptides. In the kidneys, alternative processing by an unknown protease results in the peptide urodilatin. Cleavage by MME initiates degradation of the factor and thereby regulates its activity. Degradation by IDE results in reduced activation of NPR1 (in vitro). During IDE degradation, the resulting products can temporarily stimulate NPR2 to produce cGMP, before the fragments are completely degraded and inactivated by IDE (in vitro). In terms of processing, degraded by IDE. Post-translationally, phosphorylation on Ser-128 decreases vasorelaxant activity. High levels of expression in the atria compared to the ventricles. Very low levels of expression detected in extracardiac tissues such as the brain, hypothalamus, pituitary, lung and aorta. As to expression, atria (at protein level). In terms of tissue distribution, high levels of expression in the atria with very low levels of expression in the ventricles (at protein level). Relatively low levels of expression detected in the brain compared to the atria (at protein level).

The protein resides in the secreted. The protein localises to the perikaryon. It localises to the cell projection. Hormone that plays a key role in mediating cardio-renal homeostasis, and is involved in vascular remodeling and regulating energy metabolism. Acts by specifically binding and stimulating NPR1 to produce cGMP, which in turn activates effector proteins, such as PRKG1, that drive various biological responses. Regulates vasodilation, natriuresis, diuresis and aldosterone synthesis and is therefore essential for regulating blood pressure, controlling the extracellular fluid volume and maintaining the fluid-electrolyte balance. Also involved in inhibiting cardiac remodeling and cardiac hypertrophy by inducing cardiomyocyte apoptosis and attenuating the growth of cardiomyocytes and fibroblasts. Plays a role in female pregnancy by promoting trophoblast invasion and spiral artery remodeling in uterus, and thus prevents pregnancy-induced hypertension. In adipose tissue, acts in various cGMP- and PKG-dependent pathways to regulate lipid metabolism and energy homeostasis. This includes up-regulating lipid metabolism and mitochondrial oxygen utilization by activating the AMP-activated protein kinase (AMPK), and increasing energy expenditure by acting via MAPK11 to promote the UCP1-dependent thermogenesis of brown adipose tissue. Binds the clearance receptor NPR3 which removes the hormone from circulation. In terms of biological role, may have a role in cardio-renal homeostasis through regulation of natriuresis, diuresis, vasodilation, and inhibiting aldosterone synthesis. In vitro, promotes the production of cGMP and induces vasodilation. May promote natriuresis, at least in part, by enhancing prostaglandin E2 synthesis resulting in the inhibition of renal Na+-K+-ATPase. However reports on the involvement of this peptide in mammal blood volume and blood pressure homeostasis are conflicting; according to a report, in vivo it is not sufficient to activate cGMP and does not inhibit collecting duct transport nor effect diuresis and natriuresis. Appears to bind to specific receptors that are distinct from the receptors bound by atrial natriuretic peptide and vessel dilator. Possibly enhances protein excretion in urine by decreasing proximal tubular protein reabsorption. Its function is as follows. May have a role in cardio-renal homeostasis through regulation of natriuresis, diuresis, and vasodilation. In vitro, promotes the production of cGMP and induces vasodilation. May promote natriuresis, at least in part, by enhancing prostaglandin E2 synthesis resulting in the inhibition of renal Na+-K+-ATPase. However reports on the involvement of this peptide in mammal blood volume and blood pressure homeostasis are conflicting; according to a report, in vivo it is not sufficient to activate cGMP and does not inhibit collecting duct transport nor effect diuresis and natriuresis. Appears to bind to specific receptors that are distinct from the receptors bound by the atrial natriuretic and long-acting natriuretic peptides. Possibly functions in protein excretion in urine by maintaining the integrity of the proximal tubules and enhancing protein excretion by decreasing proximal tubular protein reabsorption. Functionally, may have a role in cardio-renal homeostasis through regulation of diuresis and inhibiting aldosterone synthesis. In vitro, promotes the production of cGMP and induces vasodilation. May promote natriuresis, at least in part, by enhancing prostaglandin E2 synthesis resulting in the inhibition of renal Na+-K+-ATPase. May have a role in potassium excretion but not sodium excretion (natriuresis). Possibly enhances protein excretion in urine by decreasing proximal tubular protein reabsorption. Hormone produced in the kidneys that appears to be important for maintaining cardio-renal homeostasis. Mediates vasodilation, natriuresis and diuresis primarily in the renal system, in order to maintain the extracellular fluid volume and control the fluid-electrolyte balance. Specifically binds and stimulates cGMP production by renal transmembrane receptors, likely NPR1. Urodilatin not ANP, may be the natriuretic peptide responsible for the regulation of sodium and water homeostasis in the kidney. In terms of biological role, may have a role in cardio-renal homeostasis through regulation of natriuresis and vasodilation. In vivo promotes natriuresis and in vitro, vasodilates renal artery strips. Its function is as follows. May have a role in cardio-renal homeostasis through regulation of regulation of natriuresis and vasodilation. In vivo promotes natriuresis. In vitro, vasodilates intestinal smooth muscle but not smooth muscle strips. Functionally, may have a role in cardio-renal homeostasis through regulation of natriuresis and vasodilation. In vivo promotes natriuresis. In vitro, selectively vasodilates intestinal and vascular smooth muscle strips. May have a role in cardio-renal homeostasis through regulation of natriuresis and vasodilation. In vivo promotes natriuresis. In vitro, selectively vasodilates intestinal smooth muscle but not vascular smooth muscle strips. This Rattus norvegicus (Rat) protein is Natriuretic peptides A (Nppa).